An 813-amino-acid chain; its full sequence is Hyaluronate lyase HylB (813 aa).

The segment at residues 1 to 32 is a signal peptide (tat-type signal); that stretch reads MFGTPSRRTFLTASALSAMALAASPTVTDAIA. Catalysis depends on residues N222, H272, and Y281.

It belongs to the polysaccharide lyase 8 family. Predicted to be exported by the Tat system. The position of the signal peptide cleavage has not been experimentally proven.

The protein localises to the secreted. The enzyme catalyses [hyaluronan](n) = n 3-(4-deoxy-beta-D-gluc-4-enuronosyl)-N-acetyl-D-glucosamine + H2O. Degrades hyaluronic acid (HA) exclusively into HA disaccharides (HA-2). Produced HA-2s confer anti-inflammatory properties leading to reduced immunopathology in the mouse model of acne. The polypeptide is Hyaluronate lyase HylB (Cutibacterium acnes (strain DSM 16379 / KPA171202) (Propionibacterium acnes)).